We begin with the raw amino-acid sequence, 295 residues long: Glycine--tRNA ligase alpha subunit (295 aa).

It belongs to the class-II aminoacyl-tRNA synthetase family. In terms of assembly, tetramer of two alpha and two beta subunits.

It localises to the cytoplasm. It carries out the reaction tRNA(Gly) + glycine + ATP = glycyl-tRNA(Gly) + AMP + diphosphate. This Desulforamulus reducens (strain ATCC BAA-1160 / DSM 100696 / MI-1) (Desulfotomaculum reducens) protein is Glycine--tRNA ligase alpha subunit.